A 182-amino-acid polypeptide reads, in one-letter code: Adenine phosphoribosyltransferase (182 aa).

This sequence belongs to the purine/pyrimidine phosphoribosyltransferase family. Homodimer.

Its subcellular location is the cytoplasm. The enzyme catalyses AMP + diphosphate = 5-phospho-alpha-D-ribose 1-diphosphate + adenine. It functions in the pathway purine metabolism; AMP biosynthesis via salvage pathway; AMP from adenine: step 1/1. Catalyzes a salvage reaction resulting in the formation of AMP, that is energically less costly than de novo synthesis. The protein is Adenine phosphoribosyltransferase of Streptomyces coelicolor (strain ATCC BAA-471 / A3(2) / M145).